The chain runs to 55 residues: Large ribosomal subunit protein bL33A (55 aa).

It belongs to the bacterial ribosomal protein bL33 family.

This is Large ribosomal subunit protein bL33A from Mycobacterium ulcerans (strain Agy99).